The primary structure comprises 335 residues: Biotin synthase (335 aa).

One can recognise a Radical SAM core domain in the interval 46 to 274 (YNIQLASLFS…KSKIRLSAGR (229 aa)). 3 residues coordinate [4Fe-4S] cluster: Cys-61, Cys-65, and Cys-68. Residues Cys-105, Cys-137, Cys-197, and Arg-269 each contribute to the [2Fe-2S] cluster site.

Belongs to the radical SAM superfamily. Biotin synthase family. As to quaternary structure, homodimer. The cofactor is [4Fe-4S] cluster. Requires [2Fe-2S] cluster as cofactor.

The catalysed reaction is (4R,5S)-dethiobiotin + (sulfur carrier)-SH + 2 reduced [2Fe-2S]-[ferredoxin] + 2 S-adenosyl-L-methionine = (sulfur carrier)-H + biotin + 2 5'-deoxyadenosine + 2 L-methionine + 2 oxidized [2Fe-2S]-[ferredoxin]. It functions in the pathway cofactor biosynthesis; biotin biosynthesis; biotin from 7,8-diaminononanoate: step 2/2. Its function is as follows. Catalyzes the conversion of dethiobiotin (DTB) to biotin by the insertion of a sulfur atom into dethiobiotin via a radical-based mechanism. The chain is Biotin synthase from Prochlorococcus marinus (strain MIT 9312).